The primary structure comprises 192 residues: Fe/S biogenesis protein NfuA (192 aa).

C150 and C153 together coordinate [4Fe-4S] cluster.

It belongs to the NfuA family. Homodimer. It depends on [4Fe-4S] cluster as a cofactor.

Its function is as follows. Involved in iron-sulfur cluster biogenesis. Binds a 4Fe-4S cluster, can transfer this cluster to apoproteins, and thereby intervenes in the maturation of Fe/S proteins. Could also act as a scaffold/chaperone for damaged Fe/S proteins. The chain is Fe/S biogenesis protein NfuA from Vesicomyosocius okutanii subsp. Calyptogena okutanii (strain HA).